Consider the following 363-residue polypeptide: 3-methyl-D-ornithine--L-lysine ligase (363 aa).

Residue lysine 10 participates in ATP binding. 11–12 (LQ) lines the L-lysine pocket. ATP-binding positions include aspartate 31, 49 to 50 (DV), and 72 to 73 (EN). Glutamate 72 lines the L-lysine pocket. Positions 85 to 269 (EEFSCPVLFD…LIELLFRAFG (185 aa)) constitute an ATP-grasp domain. Residues lysine 104, lysine 131, serine 138, and 160–163 (EEYV) each bind ADP. D-ornithine-binding positions include 169–171 (SLE) and aspartate 225. Glutamate 227, glutamate 239, and aspartate 241 together coordinate Mg(2+). Glutamate 239 lines the ADP pocket. D-ornithine is bound by residues 243 to 248 (RFPSQT) and glutamate 302. L-lysine-binding residues include serine 246 and glutamate 302.

The protein belongs to the PylC family. It depends on Mg(2+) as a cofactor.

It carries out the reaction (3R)-3-methyl-D-ornithine + L-lysine + ATP = (3R)-3-methyl-D-ornithyl-N(6)-L-lysine + ADP + phosphate + H(+). It participates in amino-acid biosynthesis; L-pyrrolysine biosynthesis. Functionally, is required for the biosynthesis of pyrrolysine. Catalyzes the ATP-dependent ligation between (3R)-3-methyl-D-ornithine and L-lysine, leading to (3R)-3-methyl-D-ornithyl-N6-L-lysine. The polypeptide is 3-methyl-D-ornithine--L-lysine ligase (Methanosarcina acetivorans (strain ATCC 35395 / DSM 2834 / JCM 12185 / C2A)).